The following is a 193-amino-acid chain: Large ribosomal subunit protein bL12cy (193 aa).

The N-terminal 59 residues, 1-59 (MAATTLSIATTIRSSSFSSGLASAHHFPSRPLSIEFPFSFGVSSSSTLSHRAIYLHPIS), are a transit peptide targeting the chloroplast. Residues 170–187 (GVTKDEAEEDKTQLEEAG) show a composition bias toward basic and acidic residues. A disordered region spans residues 170–193 (GVTKDEAEEDKTQLEEAGAKVSIV).

Belongs to the bacterial ribosomal protein bL12 family.

Its subcellular location is the plastid. The protein resides in the chloroplast. The protein is Large ribosomal subunit protein bL12cy (RPL12B) of Arabidopsis thaliana (Mouse-ear cress).